The sequence spans 408 residues: Guanine nucleotide-binding protein alpha-14 subunit (408 aa).

GTP contacts are provided by residues 38–45 (HSEELEAK), 78–85 (GGPSSGKS), 201–205 (NRISK), 216–222 (VHSRKAT), 241–245 (DVGGQ), 285–288 (FPNF), 325–328 (NKVD), and Ala380. The G-alpha domain maps to 70–408 (SHIKILILGG…KANSKATGLS (339 aa)). A G1 motif region spans residues 73 to 86 (KILILGGPSSGKST). Position 85 (Ser85) interacts with Mg(2+). Residues 214–222 (DIVHSRKAT) form a G2 motif region. Thr222 provides a ligand contact to Mg(2+). A G3 motif region spans residues 237-246 (LLMVDVGGQR). Residues 321–328 (LLFFNKVD) are G4 motif. The tract at residues 378–383 (TTATNT) is G5 motif.

The protein belongs to the G-alpha family. In terms of assembly, g proteins are composed of 3 units; alpha, beta and gamma. The alpha chain contains the guanine nucleotide binding site.

In terms of biological role, guanine nucleotide-binding proteins (G proteins) are involved as modulators or transducers in various transmembrane signaling systems. The sequence is that of Guanine nucleotide-binding protein alpha-14 subunit (gpa-14) from Caenorhabditis briggsae.